The chain runs to 840 residues: Leucine--tRNA ligase (840 aa).

The 'HIGH' region signature appears at 44–55 (PYPSANGLHVGH). The 'KMSKS' region motif lies at 617–621 (KMSKS). Position 620 (lysine 620) interacts with ATP.

The protein belongs to the class-I aminoacyl-tRNA synthetase family.

The protein resides in the cytoplasm. It catalyses the reaction tRNA(Leu) + L-leucine + ATP = L-leucyl-tRNA(Leu) + AMP + diphosphate. This chain is Leucine--tRNA ligase, found in Borreliella afzelii (strain PKo) (Borrelia afzelii).